Consider the following 247-residue polypeptide: Ubiquinone biosynthesis O-methyltransferase (247 aa).

Arginine 45, glycine 65, aspartate 86, and leucine 130 together coordinate S-adenosyl-L-methionine.

The protein belongs to the methyltransferase superfamily. UbiG/COQ3 family.

It catalyses the reaction a 3-demethylubiquinol + S-adenosyl-L-methionine = a ubiquinol + S-adenosyl-L-homocysteine + H(+). The enzyme catalyses a 3-(all-trans-polyprenyl)benzene-1,2-diol + S-adenosyl-L-methionine = a 2-methoxy-6-(all-trans-polyprenyl)phenol + S-adenosyl-L-homocysteine + H(+). Its pathway is cofactor biosynthesis; ubiquinone biosynthesis. In terms of biological role, O-methyltransferase that catalyzes the 2 O-methylation steps in the ubiquinone biosynthetic pathway. The sequence is that of Ubiquinone biosynthesis O-methyltransferase from Alkalilimnicola ehrlichii (strain ATCC BAA-1101 / DSM 17681 / MLHE-1).